We begin with the raw amino-acid sequence, 105 residues long: NADH dehydrogenase [ubiquinone] 1 beta subcomplex subunit 2, mitochondrial (105 aa).

The transit peptide at 1-33 directs the protein to the mitochondrion; sequence MSALTRLASFARVGGRLFRSGCARTAGDGGVRH. Positions 85–105 are disordered; it reads PYPDPSQWTDEELGIPPDDED. Positions 93–105 are enriched in acidic residues; sequence TDEELGIPPDDED.

Belongs to the complex I NDUFB2 subunit family. Complex I is composed of 45 different subunits.

The protein resides in the mitochondrion inner membrane. In terms of biological role, accessory subunit of the mitochondrial membrane respiratory chain NADH dehydrogenase (Complex I), that is believed not to be involved in catalysis. Complex I functions in the transfer of electrons from NADH to the respiratory chain. The immediate electron acceptor for the enzyme is believed to be ubiquinone. This chain is NADH dehydrogenase [ubiquinone] 1 beta subcomplex subunit 2, mitochondrial (NDUFB2), found in Homo sapiens (Human).